We begin with the raw amino-acid sequence, 724 residues long: Probable ATP-dependent RNA helicase DDX4 (724 aa).

The disordered stretch occupies residues 1-246 (MGDEDWEAEI…SDTQGPKVTY (246 aa)). Residues 30–42 (NGDNFNRTPASSS) show a composition bias toward polar residues. Over residues 69 to 78 (DAGECNKRDN) the composition is skewed to basic and acidic residues. Over residues 150 to 162 (RGSFRGCRGGFGL) the composition is skewed to gly residues. Residues 195-205 (GDTSQSRSGSG) are compositionally biased toward low complexity. 2 positions are modified to phosphoserine: Ser-222 and Ser-226. Residues 228-247 (KSEAEGGESSDTQGPKVTYI) are interaction with RANBP9. The short motif at 288–316 (LTFEEANLCQTLNNNIAKAGYTKLTPVQK) is the Q motif element. The region spanning 319–502 (IPIILAGRDL…AEFLKSNYLF (184 aa)) is the Helicase ATP-binding domain. Residue 332–339 (AQTGSGKT) coordinates ATP. Positions 446-449 (DEAD) match the DEAD box motif. Residues 530 to 675 (KLVEILRNIG…DVPAWLEEIA (146 aa)) enclose the Helicase C-terminal domain. The span at 704 to 715 (LNTAGFSSSQAP) shows a compositional bias: polar residues. Residues 704–724 (LNTAGFSSSQAPNPVDDESWD) form a disordered region. Ser-722 bears the Phosphoserine mark.

It belongs to the DEAD box helicase family. DDX4/VASA subfamily. In terms of assembly, found in a mRNP complex, at least composed of TDRD1, TDRD6, TDRD7 and DDX4. Interacts with RANBP9. Interacts with RANBP10. Interacts with PIWIL2 and MAEL. Interacts with BMAL1 and CLOCK. Interacts with Tex19.1 and, probably, Tex19.2. Interacts with RBM46. As to expression, expressed only in ovary and testis. Expressed in migratory primordial germ cells in the region of the gonadal ridge in both sexes.

Its subcellular location is the cytoplasm. It localises to the perinuclear region. The enzyme catalyses ATP + H2O = ADP + phosphate + H(+). Its function is as follows. ATP-dependent RNA helicase required during spermatogenesis. Required to repress transposable elements and preventing their mobilization, which is essential for the germline integrity. Acts via the piRNA metabolic process, which mediates the repression of transposable elements during meiosis by forming complexes composed of piRNAs and Piwi proteins and governs the methylation and subsequent repression of transposons. Involved in the secondary piRNAs metabolic process, the production of piRNAs in fetal male germ cells through a ping-pong amplification cycle. Required for PIWIL2 slicing-triggered piRNA biogenesis: helicase activity enables utilization of one of the slice cleavage fragments generated by PIWIL2 and processing these pre-piRNAs into piRNAs. In Homo sapiens (Human), this protein is Probable ATP-dependent RNA helicase DDX4 (DDX4).